Reading from the N-terminus, the 596-residue chain is Aspartate--tRNA(Asp/Asn) ligase (596 aa).

Glu169 serves as a coordination point for L-aspartate. Residues 193-196 (QLFK) form an aspartate region. Arg215 is a binding site for L-aspartate. ATP-binding positions include 215-217 (RDE) and Gln224. Position 447 (His447) interacts with L-aspartate. Glu481 contacts ATP. An L-aspartate-binding site is contributed by Arg488. 533–536 (GWDR) serves as a coordination point for ATP. The tract at residues 559–596 (GYDPLTQAPAPITAQQRKEAGVDFKPEAKKADPGATKA) is disordered. Over residues 574 to 590 (QRKEAGVDFKPEAKKAD) the composition is skewed to basic and acidic residues.

The protein belongs to the class-II aminoacyl-tRNA synthetase family. Type 1 subfamily. In terms of assembly, homodimer.

It is found in the cytoplasm. The enzyme catalyses tRNA(Asx) + L-aspartate + ATP = L-aspartyl-tRNA(Asx) + AMP + diphosphate. In terms of biological role, aspartyl-tRNA synthetase with relaxed tRNA specificity since it is able to aspartylate not only its cognate tRNA(Asp) but also tRNA(Asn). Reaction proceeds in two steps: L-aspartate is first activated by ATP to form Asp-AMP and then transferred to the acceptor end of tRNA(Asp/Asn). This is Aspartate--tRNA(Asp/Asn) ligase from Arthrobacter sp. (strain FB24).